A 425-amino-acid chain; its full sequence is Intermediate conductance calcium-activated potassium channel protein 4 (425 aa).

A helical membrane pass occupies residues 30–50 (LVLAGTGIGLMVLHAEMLWFL). The chain crosses the membrane as a helical span at residues 59–79 (LLVKCLITLSTAFLLCLIVVF). Residues 105–121 (VAQILLELLVCGVHPVP) traverse the membrane as a helical segment. Residues 141 to 161 (GFLGEGEALLSLAMLLRLYLV) form a helical membrane-spanning segment. The chain crosses the membrane as a helical span at residues 205 to 225 (LLLGLTLGLWLTTAWVLSVAE). The pore-forming intramembrane region spans 239–259 (LWLIPITFLTIGYGDVVPGTL). The chain crosses the membrane as a helical span at residues 263–283 (IVCLCTGVMGVCCTALLVAVV). Residues 284–345 (ARKLEFNKAE…RRHQRKMLAA (62 aa)) form a calmodulin-binding region. At His356 the chain carries Phosphohistidine.

It belongs to the potassium channel KCNN family. KCa3.1/KCNN4 subfamily. As to quaternary structure, homodimer. Homotetramer. Heterotetramer of potassium channel proteins. Interacts with MTMR6; this interaction leads to selective dephosphorylation of PI(3)P in a lipid microdomain adjacent to KCNN4, resulting in a decrease of intermediate conductance calcium-activated potassium channel activity. Interacts (via the C-tail domain) with CALM1; the calmodulin binding is constitutive, does not require calcium and mediates calcium-dependent gating and four calmodulin molecules bind to one channel tetramer. Post-translationally, phosphorylation at His-356 by NDKB activates the intermediate conductance calcium-activated potassium channel activity, and conversely it's dephosphorylation by PHPT1 inhibits this activity.

It localises to the cell membrane. Its subcellular location is the cell projection. The protein resides in the ruffle membrane. The enzyme catalyses K(+)(in) = K(+)(out). Functionally, intermediate conductance calcium-activated potassium channel that mediates the voltage-independent transmembrane transfer of potassium across the cell membrane through a constitutive interaction with calmodulin which binds the intracellular calcium allowing its opening. The current is characterized by a voltage-independent activation, an intracellular calcium concentration increase-dependent activation and a single-channel conductance of about 25 picosiemens. Also presents an inwardly rectifying current, thus reducing its already small outward conductance of potassium ions, which is particularly the case when the membrane potential displays positive values, above + 20 mV. Controls calcium influx during vascular contractility by being responsible of membrane hyperpolarization induced by vasoactive factors in proliferative vascular smooth muscle cell types. Following calcium influx, the consecutive activation of KCNN4 channel leads to a hyperpolarization of the cell membrane potential and hence an increase of the electrical driving force for further calcium influx promoting sustained calcium entry in response to stimulation with chemotactic peptides. Required for maximal calcium influx and proliferation during the reactivation of naive T-cells. Plays a role in the late stages of EGF-induced macropinocytosis through activation by PI(3)P. The sequence is that of Intermediate conductance calcium-activated potassium channel protein 4 from Rattus norvegicus (Rat).